We begin with the raw amino-acid sequence, 2415 residues long: Bradyzoite-formation deficient protein 1 (2415 aa).

Disordered stretches follow at residues 369 to 392 (WNKP…PEET), 418 to 481 (HLTS…PYTR), and 761 to 845 (DGCG…QDTQ). Positions 419 to 429 (LTSRQHPNPRP) are enriched in basic residues. Over residues 430 to 443 (RMKEEHCGREREVL) the composition is skewed to basic and acidic residues. 2 stretches are compositionally biased toward polar residues: residues 444-460 (SSEQ…TPAS) and 832-843 (PRTTSSSSYGQD). Positions 921–968 (WSAEEDASLAELVSRKGFKWALISSQLTGAFGIPRTGKQCRERWFNHV) constitute a Myb-like domain. The HTH myb-type domain occupies 969–1023 (NPEVKKGDWSAEEDAMILMLQNELGNRWATIAKKLRGRTENAVKNRFISLSNARL). Residues 996 to 1019 (WATIAKKLRGRTENAVKNRFISLS) constitute a DNA-binding region (H-T-H motif). 8 disordered regions span residues 1027-1050 (RPKR…KSSG), 1098-1127 (VSRP…LKNT), 1206-1270 (NDER…NGLD), 1319-1343 (PACD…AQRQ), 1501-1521 (QLWT…QQHE), 1905-1932 (VSRD…TSQS), 1959-2013 (RVRW…GSTA), and 2161-2222 (GTDA…EMQD). The span at 1036–1050 (DCFSNRRTGSGKSSG) shows a compositional bias: polar residues. Residues 1227 to 1237 (AHEHADIARSD) show a composition bias toward basic and acidic residues. 2 stretches are compositionally biased toward polar residues: residues 1327–1343 (PQNS…AQRQ) and 1501–1520 (QLWT…NQQH). Polar residues predominate over residues 1974–1985 (SVSSGASNSATT). The segment covering 2181–2197 (QAHRRDGHDMQRVQRCD) has biased composition (basic and acidic residues).

It is found in the nucleus. Its function is as follows. Master transcription factor that controls the differentiation of acute-stage tachyzoite parasites into chronic-stage bradyzoites, which form intracellular cysts resistant to immune clearance and existing therapies. Sufficient to drive differentiation into bradyzoite stage. Following translation in response to stress conditions, binds to the promoter of many chronic stage-specific genes and promotes their expression, thereby driving differentiation into bradyzoites. This is Bradyzoite-formation deficient protein 1 from Toxoplasma gondii (strain ATCC 50611 / Me49).